A 160-amino-acid polypeptide reads, in one-letter code: Endoribonuclease YbeY (160 aa).

Zn(2+) is bound by residues His124, His128, and His134.

It belongs to the endoribonuclease YbeY family. Zn(2+) serves as cofactor.

It is found in the cytoplasm. Single strand-specific metallo-endoribonuclease involved in late-stage 70S ribosome quality control and in maturation of the 3' terminus of the 16S rRNA. This Jannaschia sp. (strain CCS1) protein is Endoribonuclease YbeY.